The chain runs to 594 residues: UvrABC system protein C (594 aa).

The 87-residue stretch at 13-99 (HSSGVYQYFD…IKQLKPKYNI (87 aa)) folds into the GIY-YIG domain. The 36-residue stretch at 205–240 (DKLIKELELKMERLSNNLRFEEALIYRDRIAKIQKI) folds into the UVR domain.

This sequence belongs to the UvrC family. As to quaternary structure, interacts with UvrB in an incision complex.

The protein resides in the cytoplasm. The UvrABC repair system catalyzes the recognition and processing of DNA lesions. UvrC both incises the 5' and 3' sides of the lesion. The N-terminal half is responsible for the 3' incision and the C-terminal half is responsible for the 5' incision. The protein is UvrABC system protein C of Helicobacter pylori (strain HPAG1).